Here is an 86-residue protein sequence, read N- to C-terminus: Cell division topological specificity factor (86 aa).

The protein belongs to the MinE family.

Functionally, prevents the cell division inhibition by proteins MinC and MinD at internal division sites while permitting inhibition at polar sites. This ensures cell division at the proper site by restricting the formation of a division septum at the midpoint of the long axis of the cell. This is Cell division topological specificity factor from Photobacterium profundum (strain SS9).